Consider the following 90-residue polypeptide: Bombyxin B-7 (90 aa).

Positions 1–20 (MMKTSVMLMLVVVISLMCSG) are cleaved as a signal peptide. 3 cysteine pairs are disulfide-bonded: Cys-30/Cys-76, Cys-42/Cys-89, and Cys-75/Cys-80. A propeptide spans 49 to 67 (GGAQYAPYFWTRQYLGSRG) (c peptide like).

Belongs to the insulin family. Heterodimer of a B chain and an A chain linked by two disulfide bonds.

Its subcellular location is the secreted. In terms of biological role, brain peptide responsible for activation of prothoracic glands to produce ecdysone in insects. The polypeptide is Bombyxin B-7 (BBXB7) (Bombyx mori (Silk moth)).